A 1462-amino-acid polypeptide reads, in one-letter code: Glucosyltransferase-S (1462 aa).

The interval 35–164 (SSVSAETEQQ…RQTAAQENKN (130 aa)) is disordered. The span at 37-52 (VSAETEQQTSDKVVTQ) shows a compositional bias: polar residues. The segment covering 71 to 85 (TKQAQTEQTQAQSQA) has biased composition (low complexity). The segment covering 86-108 (NVADTSTSITKETPSQNITTQAN) has biased composition (polar residues). Residues 109–133 (SDDKTVTNTKSEEAQTSEERTKQAE) show a composition bias toward basic and acidic residues. Low complexity predominate over residues 134–149 (EAQATASSQALTQAKA). A compositionally biased stretch (polar residues) spans 154 to 163 (QRQTAAQENK). Cell wall-binding repeat units follow at residues 171–190 (IPNV…DGQP), 192–211 (KNFA…NTGA), 1095–1115 (STGF…GYQA), 1116–1136 (KNSF…NGHM), 1137–1156 (VYGL…NGVQ), 1180–1201 (SNGY…SGVM), 1202–1221 (AVGL…DGYQ), 1223–1244 (KGAW…SGNM), 1246–1266 (VNRF…DGIA), 1267–1286 (LVGV…DGKQ), 1310–1330 (RNIF…DGVA), 1331–1350 (VTGS…DGKQ), 1352–1372 (KGSF…SGEL), and 1374–1394 (VNRF…NGEA).

The protein belongs to the glycosyl hydrolase 70 family.

The protein resides in the secreted. The catalysed reaction is [(1-&gt;6)-alpha-D-glucosyl](n) + sucrose = [(1-&gt;6)-alpha-D-glucosyl](n+1) + D-fructose. Functionally, production of extracellular glucans, that are thought to play a key role in the development of the dental plaque because of their ability to adhere to smooth surfaces and mediate the aggregation of bacterial cells and food debris. This chain is Glucosyltransferase-S (gtfD), found in Streptococcus mutans serotype c (strain ATCC 700610 / UA159).